We begin with the raw amino-acid sequence, 409 residues long: Proteasome-activating nucleotidase (409 aa).

The interval 1-22 (MTLSSAGGSRSHRHNGGHSERD) is disordered. A coiled-coil region spans residues 23–58 (VEIRILKDKVRSLTKEKISLQKELEYYKNEITKLLS). Residues 183-188 (GTGKTL) and histidine 322 contribute to the ATP site.

It belongs to the AAA ATPase family. In terms of assembly, homohexamer. The hexameric complex has a two-ring architecture resembling a top hat that caps the 20S proteasome core at one or both ends. Upon ATP-binding, the C-terminus of PAN interacts with the alpha-rings of the proteasome core by binding to the intersubunit pockets.

Its subcellular location is the cytoplasm. Functionally, ATPase which is responsible for recognizing, binding, unfolding and translocation of substrate proteins into the archaeal 20S proteasome core particle. Is essential for opening the gate of the 20S proteasome via an interaction with its C-terminus, thereby allowing substrate entry and access to the site of proteolysis. Thus, the C-termini of the proteasomal ATPase function like a 'key in a lock' to induce gate opening and therefore regulate proteolysis. Unfolding activity requires energy from ATP hydrolysis, whereas ATP binding alone promotes ATPase-20S proteasome association which triggers gate opening, and supports translocation of unfolded substrates. The polypeptide is Proteasome-activating nucleotidase (Aeropyrum pernix (strain ATCC 700893 / DSM 11879 / JCM 9820 / NBRC 100138 / K1)).